A 465-amino-acid chain; its full sequence is MVSSQRPVPNKIQKQQYLSISPSNSVLKDDVELEFSDVFGPLPEEANDIAYDEPAVVYSRSHSLVGPCSLDSHSLKLTKLTLLETEDSIDLVECLEGESLKENDDFSGNDDSDNEKALEGDLVKVSGVVGIDDFEVMKVVGKGAFGKVYQVRKKETSEIYAMKVMRKDHIMEKNHAEYMKAERDILTKIDHPFIVQLKYSFQTKYRLYLVLDFINGGHLFFQLYHQGLFREDLARVYTAEIVSAVSHLHEKGIMHRDLKPENILMDTDGHVMLTDFGLAKEFEENTRSNSMCGTTEYMAPEIVRGKGHDKAADWWSVGILLYEMLTGKPPFLGSKGKIQQKIVKDKIKLPQFLSNEAHAILKGLLQKEPERRLGSGLSGAEEIKQHKWFKGINWKKLEAREVMPSFKPEVSGRQCIANFDKCWTDMSVLDSPASSPSSDPKANPFTNFTYVRPPPSFLHQSTTTL.

Residues 91–96 (LVECLE) carry the LVxCxE motif motif. Positions 134 to 389 (FEVMKVVGKG…AEEIKQHKWF (256 aa)) constitute a Protein kinase domain. ATP contacts are provided by residues 140 to 148 (VGKGAFGKV) and Lys-163. The active-site Proton acceptor is Asp-257. Residues 275 to 301 (DFGLAKEFEENTRSNSMCGTTEYMAPE) form an activation loop region. Residue Ser-290 is modified to Phosphoserine; by PDPK1. The 71-residue stretch at 390-460 (KGINWKKLEA…VRPPPSFLHQ (71 aa)) folds into the AGC-kinase C-terminal domain. Thr-449 carries the phosphothreonine; by TOR modification.

The protein belongs to the protein kinase superfamily. AGC Ser/Thr protein kinase family. S6 kinase subfamily. In terms of assembly, interacts with RAPTOR1. Interacts with RBR1-E2FB complex through its LVxCxE motif. Interacts with TAP46. Binds to MRF1. Post-translationally, undergoes serine-specific autophosphorylation. Phosphorylated at Thr-449 by TOR. Expressed in all tissues.

The protein resides in the cytoplasm. The protein localises to the nucleus. The catalysed reaction is L-seryl-[protein] + ATP = O-phospho-L-seryl-[protein] + ADP + H(+). It catalyses the reaction L-threonyl-[protein] + ATP = O-phospho-L-threonyl-[protein] + ADP + H(+). Activated by PDK1. Repressed during osmotic stress. Its function is as follows. Downstream effector of TOR signaling pathway involved in osmotic stress response. Could be involved in the control of plant growth and development. Phosphorylates the ribosomal proteins P14, P16 and S6. Functions as a repressor of cell proliferation and required for maintenance of chromosome stability and ploidy levels through the RBR1-E2F pathway. Mediates the phosphorylation of MRFs (e.g. MRF1). In Arabidopsis thaliana (Mouse-ear cress), this protein is Serine/threonine-protein kinase AtPK1/AtPK6.